Consider the following 751-residue polypeptide: NAD(P)H-quinone oxidoreductase subunit 5, chloroplastic (751 aa).

16 helical membrane-spanning segments follow: residues 9–29 (WIIPFIPLTVPLLIGAGLIIF), 40–60 (WAFPSILLLSLVMLFSTKLSI), 89–109 (VDPLTSIMSMLITTVGILVLI), 125–145 (FAYLSFFNTSMLGLVTSSNFI), 147–167 (IYIFWELVGMCSYLLIGFWFT), 185–205 (GDFGLLLGILGLYWLTGSFEF), 219–239 (NEVHFLVGTVCTFLLFAGAVA), 258–278 (TPISALIHAATMVAAGIFLVA), 280–300 (LFPLLIVTPFILNLIALVGII), 327–347 (LGYMMLALGMGSYRAALFHLI), 354–374 (ALLFLGSGCVIHSMEAIVGYS), 396–416 (TAFLLGTLSLSGIPPLACFWS), 425–445 (WLYSPIFAIISWATVGFTAFY), 543–563 (LFPLLVLIIFTGVIGFIGIPF), 599–619 (FLTNATLSVSIAYSGIVLASF), and 719–739 (ISSYLFLYLLYASIFLLIYYF).

Belongs to the complex I subunit 5 family. NDH is composed of at least 16 different subunits, 5 of which are encoded in the nucleus.

The protein resides in the plastid. Its subcellular location is the chloroplast thylakoid membrane. The catalysed reaction is a plastoquinone + NADH + (n+1) H(+)(in) = a plastoquinol + NAD(+) + n H(+)(out). The enzyme catalyses a plastoquinone + NADPH + (n+1) H(+)(in) = a plastoquinol + NADP(+) + n H(+)(out). NDH shuttles electrons from NAD(P)H:plastoquinone, via FMN and iron-sulfur (Fe-S) centers, to quinones in the photosynthetic chain and possibly in a chloroplast respiratory chain. The immediate electron acceptor for the enzyme in this species is believed to be plastoquinone. Couples the redox reaction to proton translocation, and thus conserves the redox energy in a proton gradient. The chain is NAD(P)H-quinone oxidoreductase subunit 5, chloroplastic (ndhF) from Fagopyrum esculentum subsp. ancestrale (Wild buckwheat).